The primary structure comprises 344 residues: N-acetyl-gamma-glutamyl-phosphate reductase (344 aa).

Cysteine 148 is an active-site residue.

Belongs to the NAGSA dehydrogenase family. Type 1 subfamily.

Its subcellular location is the cytoplasm. It carries out the reaction N-acetyl-L-glutamate 5-semialdehyde + phosphate + NADP(+) = N-acetyl-L-glutamyl 5-phosphate + NADPH + H(+). It functions in the pathway amino-acid biosynthesis; L-arginine biosynthesis; N(2)-acetyl-L-ornithine from L-glutamate: step 3/4. Functionally, catalyzes the NADPH-dependent reduction of N-acetyl-5-glutamyl phosphate to yield N-acetyl-L-glutamate 5-semialdehyde. This is N-acetyl-gamma-glutamyl-phosphate reductase from Clostridium botulinum (strain Eklund 17B / Type B).